The following is a 484-amino-acid chain: ATP synthase subunit beta (484 aa).

162–169 contacts ATP; sequence GGAGVGKT.

The protein belongs to the ATPase alpha/beta chains family. As to quaternary structure, F-type ATPases have 2 components, CF(1) - the catalytic core - and CF(0) - the membrane proton channel. CF(1) has five subunits: alpha(3), beta(3), gamma(1), delta(1), epsilon(1). CF(0) has four main subunits: a(1), b(1), b'(1) and c(9-12).

It is found in the cellular thylakoid membrane. It catalyses the reaction ATP + H2O + 4 H(+)(in) = ADP + phosphate + 5 H(+)(out). Functionally, produces ATP from ADP in the presence of a proton gradient across the membrane. The catalytic sites are hosted primarily by the beta subunits. This chain is ATP synthase subunit beta, found in Synechococcus elongatus (strain ATCC 33912 / PCC 7942 / FACHB-805) (Anacystis nidulans R2).